We begin with the raw amino-acid sequence, 196 residues long: UMP-CMP kinase (196 aa).

13-18 (GAGKGT) lines the ATP pocket. Residue serine 33 is modified to Phosphoserine. The segment at 33-63 (SAGELLRDERKNPDSQYGELIEKYIKEGKIV) is NMP. Arginine 39 contributes to the a ribonucleoside 5'-phosphate binding site. Residues lysine 43 and lysine 55 each carry the N6-acetyllysine modification. An a ribonucleoside 5'-phosphate-binding site is contributed by 61–63 (KIV). Residue lysine 73 forms a Glycyl lysine isopeptide (Lys-Gly) (interchain with G-Cter in SUMO2) linkage. Position 93–96 (93–96 (GFPR)) interacts with a ribonucleoside 5'-phosphate. Asparagine 100 is a binding site for CMP. Lysine 106 is subject to N6-succinyllysine. The LID stretch occupies residues 133 to 143 (ERGKSSGRSDD). An ATP-binding site is contributed by arginine 134. Arginine 140 and arginine 151 together coordinate a ribonucleoside 5'-phosphate. Position 179 (lysine 179) interacts with ATP. The residue at position 180 (serine 180) is a Phosphoserine.

Belongs to the adenylate kinase family. UMP-CMP kinase subfamily. In terms of assembly, monomer. Mg(2+) is required as a cofactor.

Its subcellular location is the nucleus. It is found in the cytoplasm. The catalysed reaction is CMP + ATP = CDP + ADP. It catalyses the reaction dCMP + ATP = dCDP + ADP. The enzyme catalyses UMP + ATP = UDP + ADP. It carries out the reaction a 2'-deoxyribonucleoside 5'-diphosphate + ATP = a 2'-deoxyribonucleoside 5'-triphosphate + ADP. The catalysed reaction is a ribonucleoside 5'-diphosphate + ATP = a ribonucleoside 5'-triphosphate + ADP. Functionally, catalyzes the phosphorylation of pyrimidine nucleoside monophosphates at the expense of ATP. Plays an important role in de novo pyrimidine nucleotide biosynthesis. Has preference for UMP and CMP as phosphate acceptors. Also displays broad nucleoside diphosphate kinase activity. The polypeptide is UMP-CMP kinase (Cmpk1) (Rattus norvegicus (Rat)).